A 390-amino-acid polypeptide reads, in one-letter code: Large ribosomal subunit protein uL3y (390 aa).

The interval 1–36 (MSHRKFEHPRHGSLGFLPRKRASRHRGKVKAFPKDD) is disordered. Positions 18-31 (PRKRASRHRGKVKA) are enriched in basic residues.

This sequence belongs to the universal ribosomal protein uL3 family.

It localises to the cytoplasm. In Arabidopsis thaliana (Mouse-ear cress), this protein is Large ribosomal subunit protein uL3y (ARP2).